The sequence spans 287 residues: Phosphatidylserine decarboxylase proenzyme (287 aa).

Catalysis depends on charge relay system; for autoendoproteolytic cleavage activity residues Asp90, His147, and Ser252. Ser252 (schiff-base intermediate with substrate; via pyruvic acid; for decarboxylase activity) is an active-site residue. The residue at position 252 (Ser252) is a Pyruvic acid (Ser); by autocatalysis.

Belongs to the phosphatidylserine decarboxylase family. PSD-B subfamily. Prokaryotic type I sub-subfamily. Heterodimer of a large membrane-associated beta subunit and a small pyruvoyl-containing alpha subunit. Pyruvate is required as a cofactor. Post-translationally, is synthesized initially as an inactive proenzyme. Formation of the active enzyme involves a self-maturation process in which the active site pyruvoyl group is generated from an internal serine residue via an autocatalytic post-translational modification. Two non-identical subunits are generated from the proenzyme in this reaction, and the pyruvate is formed at the N-terminus of the alpha chain, which is derived from the carboxyl end of the proenzyme. The autoendoproteolytic cleavage occurs by a canonical serine protease mechanism, in which the side chain hydroxyl group of the serine supplies its oxygen atom to form the C-terminus of the beta chain, while the remainder of the serine residue undergoes an oxidative deamination to produce ammonia and the pyruvoyl prosthetic group on the alpha chain. During this reaction, the Ser that is part of the protease active site of the proenzyme becomes the pyruvoyl prosthetic group, which constitutes an essential element of the active site of the mature decarboxylase.

It localises to the cell membrane. The enzyme catalyses a 1,2-diacyl-sn-glycero-3-phospho-L-serine + H(+) = a 1,2-diacyl-sn-glycero-3-phosphoethanolamine + CO2. It participates in phospholipid metabolism; phosphatidylethanolamine biosynthesis; phosphatidylethanolamine from CDP-diacylglycerol: step 2/2. Its function is as follows. Catalyzes the formation of phosphatidylethanolamine (PtdEtn) from phosphatidylserine (PtdSer). This chain is Phosphatidylserine decarboxylase proenzyme, found in Pseudomonas entomophila (strain L48).